A 389-amino-acid chain; its full sequence is Apoptosis inhibitor U19 (389 aa).

It belongs to the beta-herpesvirinae UL38 protein family. As to quaternary structure, interacts with host MDM2; this interaction leads to the stabilization of host TP53.

The protein localises to the host cytoplasm. It is found in the host nucleus. Functionally, plays a role in the inhibition of host apoptosis to facilitate efficient viral replication. Promotes stabilization and inactivation of host TP53 through interaction with host MDM2. The polypeptide is Apoptosis inhibitor U19 (U19) (Human herpesvirus 6A (strain Uganda-1102) (HHV-6 variant A)).